Consider the following 166-residue polypeptide: MFPMVTEFMNYGQQTVRAARYIGQGFMITLSHANRLPVTIQYPYEKLITSERFRGRIHFEFDKCIACEVCVRVCPIDLPVVDWKLETDIRKKRLLNYSIDFGICIFCGNCVEYCPTNCLSMTEEYELSTYDRHELNYNQIALGRLPISIIDDYTIRTILNLPEIKT.

4Fe-4S ferredoxin-type domains follow at residues 55 to 84 (GRIH…VDWK) and 95 to 124 (LNYS…MTEE). [4Fe-4S] cluster-binding residues include C64, C67, C70, C74, C104, C107, C110, and C114.

This sequence belongs to the complex I 23 kDa subunit family. In terms of assembly, NDH is composed of at least 16 different subunits, 5 of which are encoded in the nucleus. Requires [4Fe-4S] cluster as cofactor.

It localises to the plastid. Its subcellular location is the chloroplast thylakoid membrane. It carries out the reaction a plastoquinone + NADH + (n+1) H(+)(in) = a plastoquinol + NAD(+) + n H(+)(out). It catalyses the reaction a plastoquinone + NADPH + (n+1) H(+)(in) = a plastoquinol + NADP(+) + n H(+)(out). Its function is as follows. NDH shuttles electrons from NAD(P)H:plastoquinone, via FMN and iron-sulfur (Fe-S) centers, to quinones in the photosynthetic chain and possibly in a chloroplast respiratory chain. The immediate electron acceptor for the enzyme in this species is believed to be plastoquinone. Couples the redox reaction to proton translocation, and thus conserves the redox energy in a proton gradient. The sequence is that of NAD(P)H-quinone oxidoreductase subunit I, chloroplastic from Picradeniopsis absinthifolia (Hairyseed bahia).